Consider the following 931-residue polypeptide: ORF4 polyprotein (931 aa).

In terms of processing, proteolytic processing of ORF4 polyprotein yields the VP4a, VP4b and VP4c capsid proteins.

The protein resides in the virion. ORF4 polyprotein codes for VP4a, VP4b, and VP4c, three of the four proteins that self-assemble to form the icosahedral capsid. The capsid is made of VP3 (coded by ORF3), VP4a, VP4b and VP4c. This Drosophila melanogaster (Fruit fly) protein is ORF4 polyprotein.